Consider the following 946-residue polypeptide: Multiple C2 and transmembrane domain-containing protein 1 (946 aa).

Disordered regions lie at residues 28 to 193 (QLGV…QKSS) and 205 to 229 (LEPA…KGEE). A compositionally biased stretch (gly residues) spans 31–43 (VGKGKGGGGGRAG). Positions 87–96 (FSSSQPNLCC) are enriched in polar residues. The span at 143–163 (PGGRSPDSAPSSSASSSLSSS) shows a compositional bias: low complexity. A compositionally biased stretch (basic and acidic residues) spans 169–187 (RGDRIRDEGTRRGSPEAHL). 3 C2 domains span residues 235–353 (KINP…DVTL), 399–516 (QTQS…KLEL), and 550–671 (HKER…AYVL). Residues Asp270, Asp276, Asp323, Asp325, Asp331, Asp433, Asp439, Asp486, Asp488, Asp494, Asp589, Asp595, Asp641, Asp643, and Asp649 each contribute to the Ca(2+) site. The next 2 helical transmembrane spans lie at 758–778 (FVLF…LLLL) and 861–881 (PFLS…LYFI).

It belongs to the MCTP family. Ca(2+) serves as cofactor. Expressed in the brain and central nervous system (at protein level). Isoform 1 and isoform 2 are expressed in the brain, kidney, liver, heart, lung, skeletal muscle, testis and spleen. Isoform 2 shows a higher expression in the brain, heart and skeletal muscle.

The protein localises to the cytoplasmic vesicle. The protein resides in the secretory vesicle. It is found in the synaptic vesicle membrane. It localises to the recycling endosome. Its subcellular location is the endoplasmic reticulum membrane. Its function is as follows. Calcium sensor which is essential for the stabilization of normal baseline neurotransmitter release and for the induction and long-term maintenance of presynaptic homeostatic plasticity. Overexpression in cultured neurons significantly inhibits neuronal transferrin endocytosis, secretory vesicle retrieval, cell migration, and oxidative stress from glutamate toxicity. The polypeptide is Multiple C2 and transmembrane domain-containing protein 1 (Rattus norvegicus (Rat)).